We begin with the raw amino-acid sequence, 89 residues long: MAKKSKIAKEQKREKLVAQYYELRKELKDKGDYEALRKLPRDSSPTRLTRRCKVTGRPRGVYRKFGMSRIALRDYAHKGQIPGVKKSSW.

Belongs to the universal ribosomal protein uS14 family. Part of the 30S ribosomal subunit. Contacts proteins S3 and S10.

Functionally, binds 16S rRNA, required for the assembly of 30S particles and may also be responsible for determining the conformation of the 16S rRNA at the A site. The protein is Small ribosomal subunit protein uS14A of Staphylococcus saprophyticus subsp. saprophyticus (strain ATCC 15305 / DSM 20229 / NCIMB 8711 / NCTC 7292 / S-41).